The following is a 116-amino-acid chain: Large ribosomal subunit protein uL24 (116 aa).

The segment at 1-21 is disordered; the sequence is MATNNGAGKARHKFHVKKGDT.

Belongs to the universal ribosomal protein uL24 family. In terms of assembly, part of the 50S ribosomal subunit.

Functionally, one of two assembly initiator proteins, it binds directly to the 5'-end of the 23S rRNA, where it nucleates assembly of the 50S subunit. One of the proteins that surrounds the polypeptide exit tunnel on the outside of the subunit. The protein is Large ribosomal subunit protein uL24 of Gloeobacter violaceus (strain ATCC 29082 / PCC 7421).